A 309-amino-acid polypeptide reads, in one-letter code: Glutaminase (309 aa).

Substrate is bound by residues Ser-65, Asn-117, Glu-162, Asn-169, Tyr-193, Tyr-245, and Val-263.

It belongs to the glutaminase family. Homotetramer.

The catalysed reaction is L-glutamine + H2O = L-glutamate + NH4(+). The sequence is that of Glutaminase from Shouchella clausii (strain KSM-K16) (Alkalihalobacillus clausii).